The chain runs to 254 residues: Triosephosphate isomerase (254 aa).

Residue 9–11 (NWK) participates in substrate binding. Catalysis depends on H96, which acts as the Electrophile. E168 serves as the catalytic Proton acceptor. Positions 174 and 213 each coordinate substrate.

This sequence belongs to the triosephosphate isomerase family. In terms of assembly, homodimer.

It is found in the cytoplasm. It catalyses the reaction D-glyceraldehyde 3-phosphate = dihydroxyacetone phosphate. The protein operates within carbohydrate biosynthesis; gluconeogenesis. Its pathway is carbohydrate degradation; glycolysis; D-glyceraldehyde 3-phosphate from glycerone phosphate: step 1/1. In terms of biological role, involved in the gluconeogenesis. Catalyzes stereospecifically the conversion of dihydroxyacetone phosphate (DHAP) to D-glyceraldehyde-3-phosphate (G3P). The chain is Triosephosphate isomerase from Buchnera aphidicola subsp. Schizaphis graminum (strain Sg).